Here is a 1026-residue protein sequence, read N- to C-terminus: Cadherin-like and PC-esterase domain-containing protein 1 (1026 aa).

Positions 1–34 (MVCRPVFPCRRRFCPRPFLVGLVVAICLFYQTLT) are cleaved as a signal peptide. 6 N-linked (GlcNAc...) asparagine glycosylation sites follow: asparagine 251, asparagine 404, asparagine 413, asparagine 737, asparagine 791, and asparagine 985.

Belongs to the PC-esterase family.

In Homo sapiens (Human), this protein is Cadherin-like and PC-esterase domain-containing protein 1 (CPED1).